The primary structure comprises 142 residues: Large ribosomal subunit protein uL11 (142 aa).

The protein belongs to the universal ribosomal protein uL11 family. As to quaternary structure, part of the ribosomal stalk of the 50S ribosomal subunit. Interacts with L10 and the large rRNA to form the base of the stalk. L10 forms an elongated spine to which L12 dimers bind in a sequential fashion forming a multimeric L10(L12)X complex. One or more lysine residues are methylated.

Functionally, forms part of the ribosomal stalk which helps the ribosome interact with GTP-bound translation factors. In Buchnera aphidicola subsp. Acyrthosiphon pisum (strain APS) (Acyrthosiphon pisum symbiotic bacterium), this protein is Large ribosomal subunit protein uL11.